A 191-amino-acid polypeptide reads, in one-letter code: Large ribosomal subunit protein uL6B (191 aa).

Belongs to the universal ribosomal protein uL6 family. In terms of assembly, component of the large ribosomal subunit (LSU). Mature yeast ribosomes consist of a small (40S) and a large (60S) subunit. The 40S small subunit contains 1 molecule of ribosomal RNA (18S rRNA) and 33 different proteins (encoded by 57 genes). The large 60S subunit contains 3 rRNA molecules (25S, 5.8S and 5S rRNA) and 46 different proteins (encoded by 81 genes).

The protein resides in the cytoplasm. Functionally, component of the ribosome, a large ribonucleoprotein complex responsible for the synthesis of proteins in the cell. The small ribosomal subunit (SSU) binds messenger RNAs (mRNAs) and translates the encoded message by selecting cognate aminoacyl-transfer RNA (tRNA) molecules. The large subunit (LSU) contains the ribosomal catalytic site termed the peptidyl transferase center (PTC), which catalyzes the formation of peptide bonds, thereby polymerizing the amino acids delivered by tRNAs into a polypeptide chain. The nascent polypeptides leave the ribosome through a tunnel in the LSU and interact with protein factors that function in enzymatic processing, targeting, and the membrane insertion of nascent chains at the exit of the ribosomal tunnel. This is Large ribosomal subunit protein uL6B from Saccharomyces cerevisiae (strain ATCC 204508 / S288c) (Baker's yeast).